The sequence spans 214 residues: Pyridoxine/pyridoxamine 5'-phosphate oxidase (214 aa).

Residues 11–14 (RREY) and K68 contribute to the substrate site. FMN is bound by residues 63-68 (RLVLLK), 78-79 (FT), R84, K85, and Q107. Y125 and R129 together coordinate substrate. Residues 142–143 (QS) and W187 contribute to the FMN site. 193-195 (RLH) is a binding site for substrate. Residue R197 participates in FMN binding.

Belongs to the pyridoxamine 5'-phosphate oxidase family. As to quaternary structure, homodimer. Requires FMN as cofactor.

It carries out the reaction pyridoxamine 5'-phosphate + O2 + H2O = pyridoxal 5'-phosphate + H2O2 + NH4(+). The enzyme catalyses pyridoxine 5'-phosphate + O2 = pyridoxal 5'-phosphate + H2O2. It functions in the pathway cofactor metabolism; pyridoxal 5'-phosphate salvage; pyridoxal 5'-phosphate from pyridoxamine 5'-phosphate: step 1/1. The protein operates within cofactor metabolism; pyridoxal 5'-phosphate salvage; pyridoxal 5'-phosphate from pyridoxine 5'-phosphate: step 1/1. Its function is as follows. Catalyzes the oxidation of either pyridoxine 5'-phosphate (PNP) or pyridoxamine 5'-phosphate (PMP) into pyridoxal 5'-phosphate (PLP). This is Pyridoxine/pyridoxamine 5'-phosphate oxidase from Blochmanniella floridana.